The primary structure comprises 245 residues: Thiopurine S-methyltransferase (245 aa).

The residue at position 14 (Ser14) is a Phosphoserine. S-adenosyl-L-methionine is bound at residue 29-40; the sequence is WQDKWVNGKTAF. Phe40 is a binding site for substrate. An N6-acetyllysine modification is found at Lys58. S-adenosyl-L-methionine is bound by residues Leu69, Glu90, 134 to 135, and Arg152; that span reads SI.

It belongs to the class I-like SAM-binding methyltransferase superfamily. TPMT family. As to quaternary structure, monomer.

It localises to the cytoplasm. The enzyme catalyses S-adenosyl-L-methionine + a thiopurine = S-adenosyl-L-homocysteine + a thiopurine S-methylether.. This Chlorocebus aethiops (Green monkey) protein is Thiopurine S-methyltransferase (TPMT).